Reading from the N-terminus, the 1279-residue chain is ATP-dependent helicase/nuclease subunit A (1279 aa).

The UvrD-like helicase ATP-binding domain occupies 4 to 499 (TKWTDEQRQA…VKLFKNFRSR (496 aa)). An ATP-binding site is contributed by 25-32 (AGAGAGKT). The 328-residue stretch at 526–853 (EEALKVGASY…RIMSIHKSKG (328 aa)) folds into the UvrD-like helicase C-terminal domain.

Belongs to the helicase family. AddA subfamily. Heterodimer of AddA and AddB/RexB. It depends on Mg(2+) as a cofactor.

It catalyses the reaction Couples ATP hydrolysis with the unwinding of duplex DNA by translocating in the 3'-5' direction.. The enzyme catalyses ATP + H2O = ADP + phosphate + H(+). In terms of biological role, the heterodimer acts as both an ATP-dependent DNA helicase and an ATP-dependent, dual-direction single-stranded exonuclease. Recognizes the chi site generating a DNA molecule suitable for the initiation of homologous recombination. The AddA nuclease domain is required for chi fragment generation; this subunit has the helicase and 3' -&gt; 5' nuclease activities. This Clostridium botulinum (strain Kyoto / Type A2) protein is ATP-dependent helicase/nuclease subunit A.